We begin with the raw amino-acid sequence, 79 residues long: uncharacterized protein (79 aa).

This is an uncharacterized protein from Caenorhabditis elegans.